A 539-amino-acid polypeptide reads, in one-letter code: D-mannonate oxidoreductase (539 aa).

Residue 39–50 (WVHFGGGNIFRG) coordinates NAD(+).

It belongs to the mannitol dehydrogenase family. UxuB subfamily.

It carries out the reaction D-mannonate + NAD(+) = keto-D-fructuronate + NADH + H(+). Its pathway is carbohydrate metabolism. In terms of biological role, catalyzes the reduction of D-fructuronate (D-FruA) to D-mannonate (D-ManA). The polypeptide is D-mannonate oxidoreductase (Thermotoga maritima (strain ATCC 43589 / DSM 3109 / JCM 10099 / NBRC 100826 / MSB8)).